Here is a 625-residue protein sequence, read N- to C-terminus: MNPNDNNLFGDIEQDNNPSFYGNQSFLRDPYGKSKQTCPPSVTSNGDPSITNDDNNSAHNNDLVSNSIVLSKKIEQMVNDPNLQINVISSERMINSSVVAYSIELSSFDDNRMIVKRRYSEFKSLRDNLQILFPTLVIPPIPEKHTLFTYLINSIDNSKELNIIETRKRCFANFLKDIIFDSNVALKSCVLVHKFLDPNYELCWNNAVNEPPVSLIPNNLLLANPVNPTDQNGLYSLLPIVNGFELNSNIDNISSLHKLNEDLHKLNEQVHVFELRKEQNERRHPSEPTTSLFTEIPISLIDFEKNFHQNIKVLTELNKLNSRSVKNFKSIINTLIELGGNLNNFSLQIHELNTDSNALSSLIEKFGSTIDSNFLGYEAFLMNDIIPEWQEPISQLVQYYLTSLQLIKFYKFKIIQYKLVYKLKFNKYQELANISTNFESQSKLKDLRNLDIDSPSINEAIKKIELNQKRLKNRKISSKKSWYGLFGGNSKPTFNLREDLPASTIPSEGTGIRRERTPLVSDENMSYPVNPSANLENTNIDINSHYKHKINQIEKELTKLDQLIDLTNTDISTLTQELNLNFNDFLVRVEKKWLVIMLEFIKNGKQLFKDNLQNWNECKVFINDL.

Residues 1–59 (MNPNDNNLFGDIEQDNNPSFYGNQSFLRDPYGKSKQTCPPSVTSNGDPSITNDDNNSAH) form a disordered region. Composition is skewed to polar residues over residues 15–26 (DNNPSFYGNQSF) and 34–59 (SKQT…NSAH). The region spanning 79–202 (NDPNLQINVI…HKFLDPNYEL (124 aa)) is the PX domain. A 1,2-diacyl-sn-glycero-3-phospho-(1D-myo-inositol-3-phosphate)-binding residues include arginine 118, serine 120, lysine 144, and arginine 167.

The protein belongs to the sorting nexin family.

It is found in the endosome membrane. It localises to the preautophagosomal structure membrane. Its function is as follows. Required for cytoplasm to vacuole transport (Cvt), pexophagy and mitophagy. Also involved in endoplasmic reticulum-specific autophagic process and is essential for the survival of cells subjected to severe ER stress. Functions in protein retrieval from the endocytic pathway. The polypeptide is Autophagy-related protein 20 (ATG20) (Debaryomyces hansenii (strain ATCC 36239 / CBS 767 / BCRC 21394 / JCM 1990 / NBRC 0083 / IGC 2968) (Yeast)).